The chain runs to 43 residues: Delta-actitoxin-Bca1a (43 aa).

Intrachain disulfides connect Cys1–Cys41, Cys3–Cys31, and Cys24–Cys42.

Its subcellular location is the secreted. It is found in the nematocyst. Binds specifically to voltage-gated sodium channels (Nav), thereby delaying their inactivation during signal transduction. Thus it strongly stimulates mammalian cardiac muscle contraction. This is Delta-actitoxin-Bca1a from Bunodosoma capense (Knobbly sea anemone).